A 364-amino-acid polypeptide reads, in one-letter code: Putative protein C31H2.4 (364 aa).

VOC domains lie at 6-134 (AIHH…LGEF) and 161-320 (LMDH…IFSK). 3 residues coordinate Fe cation: H164, H248, and E331.

This sequence belongs to the 4HPPD family. Fe cation is required as a cofactor.

This Caenorhabditis elegans protein is Putative protein C31H2.4.